The primary structure comprises 321 residues: Lipoyl synthase (321 aa).

7 residues coordinate [4Fe-4S] cluster: C68, C73, C79, C94, C98, C101, and S308. Positions 80 to 297 (FNHGTATFMI…KVIAEDLGFS (218 aa)) constitute a Radical SAM core domain.

Belongs to the radical SAM superfamily. Lipoyl synthase family. It depends on [4Fe-4S] cluster as a cofactor.

Its subcellular location is the cytoplasm. It carries out the reaction [[Fe-S] cluster scaffold protein carrying a second [4Fe-4S](2+) cluster] + N(6)-octanoyl-L-lysyl-[protein] + 2 oxidized [2Fe-2S]-[ferredoxin] + 2 S-adenosyl-L-methionine + 4 H(+) = [[Fe-S] cluster scaffold protein] + N(6)-[(R)-dihydrolipoyl]-L-lysyl-[protein] + 4 Fe(3+) + 2 hydrogen sulfide + 2 5'-deoxyadenosine + 2 L-methionine + 2 reduced [2Fe-2S]-[ferredoxin]. It functions in the pathway protein modification; protein lipoylation via endogenous pathway; protein N(6)-(lipoyl)lysine from octanoyl-[acyl-carrier-protein]: step 2/2. Catalyzes the radical-mediated insertion of two sulfur atoms into the C-6 and C-8 positions of the octanoyl moiety bound to the lipoyl domains of lipoate-dependent enzymes, thereby converting the octanoylated domains into lipoylated derivatives. The chain is Lipoyl synthase from Shewanella amazonensis (strain ATCC BAA-1098 / SB2B).